The sequence spans 2098 residues: Non-reducing polyketide synthase crz7 (2098 aa).

One can recognise a Starter acyltransferase (SAT) domain in the interval 8–243; the sequence is ILFGDQTVDP…IKLPITAAFH (236 aa). The 426-residue stretch at 364–789 folds into the Ketosynthase family 3 (KS3) domain; it reads SSDIAIIGFA…GGNTSLLLED (426 aa). Residues cysteine 532, histidine 667, and histidine 706 each act as for beta-ketoacyl synthase activity in the active site. Positions 887-1211 constitute a Malonyl-CoA:ACP transacylase (MAT) domain; the sequence is IFLFTGQGSQ…IANAYNSGVK (325 aa). The tract at residues 1270-1404 is N-terminal hotdog fold; that stretch reads TCLQGVENET…CTVMYGDGQQ (135 aa). A PKS/mFAS DH domain is found at 1270–1578; sequence TCLQGVENET…FQQMKRTTLQ (309 aa). Histidine 1305 (proton acceptor; for dehydratase activity) is an active-site residue. The tract at residues 1431-1578 is C-terminal hotdog fold; sequence IHRMLKEMIY…FQQMKRTTLQ (148 aa). Aspartate 1491 (proton donor; for dehydratase activity) is an active-site residue. Residues 1613–1690 enclose the Carrier 1 domain; the sequence is QSPSAGFSKV…ELRAFFLDKM (78 aa). Serine 1650 is modified (O-(pantetheine 4'-phosphoryl)serine). Residues 1693–1725 are disordered; that stretch reads PQATANDDDSDDSSEDEDPGYSRSQSNSTISTP. Acidic residues predominate over residues 1698–1711; that stretch reads NDDDSDDSSEDEDP. Residues 1714 to 1724 show a composition bias toward polar residues; that stretch reads SRSQSNSTIST. The Carrier 2 domain occupies 1725 to 1802; sequence PEEPDVVSIL…DVQKALGPTS (78 aa). Serine 1762 carries the post-translational modification O-(pantetheine 4'-phosphoryl)serine. The tract at residues 1844-2080 is thioesterase (TE) domain; that stretch reads LFLLPDGAGS…VSGNHFSIMF (237 aa).

The cofactor is pantetheine 4'-phosphate.

It participates in secondary metabolite biosynthesis. Functionally, non-reducing polyketide synthase; part of the gene cluster that mediates the biosynthesis of the red pigment cristazarin, a naphthazarin derivative. The polyketide product of crz7 is likely 2-acetyl-1,3,6,8-tetrahydoxynaphthalene (AT4HN) from which a probable biosynthetic route of cristazarin can be deduced. The presence of two O-methyltransferases (crz1 and crz2), an enoyl reductase (crz5), an oxidase (crz8), and a short-chain dehydrogenase (crz9) encoded in the cristazarin biosynthetic cluster is consistent with methylation of a hydroxyl group, addition of two hydroxyl groups to the naphthalene core ring, and reduction of the acetyl side chain. This Cladonia metacorallifera (Lichen-forming fungus) protein is Non-reducing polyketide synthase crz7.